A 1141-amino-acid chain; its full sequence is MTKRVITDRLRSTLQDSNYSDVGRDLINFILWELKFLDCFLHLKSLPFASECCMLDVSQKMIEILKSRILSICPDSGIQLWKGNLSMKTLYLEDVRVTLDSFGYWKEVIWKTKQEFSAEYSFPNTSLAANKVDDVSPKFVMEVIDVFVENLNVVVKINDPISWLFVPEHKEQIEQVLKELKLLRFFVWFVSNKYIEPQYQHTTFYIHALIEASHISMAVWLHLPVCSKGNQNLAPSEVSRLLSDFVEMKIKATEPGISRNNIYIDVLQDLKLTIPQAQKKHAAESGIVEILTHSMMVGLSDQMANLQEMLCLLRDNLIHLPILDLEFHLQDMDSIIVDAGLLIYSLYDIKGEKEDTTLEDINRELGFDLPRNIEPIKVIVYLVMQKAFQCNLPRIHGLGYVDFLLKNLKDFQGRYSDSLAFLKNQIQVIQMEFEILQPFLKVVVEEPHNKFKRLNEDCAIQIIRKAHEVEYVVDACINKGIPHWCLERWLQDIIEETTCIKAKIQEKNTVEDTMKTVITHTSSQLARTPRMNEEIVWFKDVIENLRNRLLNGTKGQDVISIHSMPGLGKTTLANRLYSDRSIVSQFDICAQCCVSQVYSYKELLLALLCDAIGEGSDQHREIHANELADMLRKTLLPRRYLILVDDVWENSAWDDLRGCFPDVNNRSRIILTTRHHEVAKYASVHSEPLHLRMFEEDESWKLLEKRVFGEESCSPLLKDVGLRIAKMCRQLPLSIVLVADVLLDFCKERAAEENFLLWIKRDQITKAAYSHKQHTHLALTEMDTLLEWSTSGSLVGSVLFKNYDPYFVRSLLSSHAFEISHILPHFKFLKVLDLEHQVVIDFIPTELPYLRYFSALIHQNSIPSSISNLWNLETLILKGTSAKTLLLPSTVWDMVKLGYLYIPNFSPENKKALLENSPKLDDLETLSNPYFARVEDAELMLRKTPNLRKLICEVECLEYPHQYHVLNFPVQLEILKFYRSKASKTIPFCISAPNLKYLKLSGYYLDSQYLSETVDHLKHLEVLKLYNVEFGDYREWEVSNGKFPQLKILKLENLSLMKWIVADDAFPILEQLVLHDCRDLMEIPSCFMDILSLKYIEVDMSNKSVVKSAKNIEETQVEDNQNTNFKLVIIKVHYWEKLYSA.

Residues 417-437 adopt a coiled-coil conformation; it reads DSLAFLKNQIQVIQMEFEILQ. Positions 516-742 constitute an NB-ARC domain; it reads TVITHTSSQL…LSIVLVADVL (227 aa). LRR repeat units lie at residues 826 to 851, 869 to 894, 992 to 1016, 1017 to 1041, and 1043 to 1068; these read FKFLKVLDLEHQVVIDFIPTELPYLR, LWNLETLILKGTSAKTLLLPSTVWDM, APNLKYLKLSGYYLDSQYLSETVDH, LKHLEVLKLYNVEFGDYREWEVSNG, and FPQLKILKLENLSLMKWIVADDAFPI.

It belongs to the disease resistance NB-LRR family.

Its subcellular location is the cytoplasm. It is found in the membrane. Functionally, confers resistance to late blight (Phytophthora infestans) races carrying the avirulence gene Avr1. Resistance proteins guard the plant against pathogens that contain an appropriate avirulence protein via an indirect interaction with this avirulence protein. That triggers a defense system including the hypersensitive response, which restricts the pathogen growth. In Solanum demissum (Wild potato), this protein is Putative late blight resistance protein homolog R1B-13 (R1B-13).